The sequence spans 462 residues: Microspherule protein 1 (462 aa).

N-acetylmethionine is present on M1. Residues 1-130 are disordered; that stretch reads MDKDSQGLLD…KSKQPLQVTK (130 aa). A Phosphoserine modification is found at S22. A compositionally biased stretch (basic residues) spans 43 to 55; it reads PKRRSSSRFIKRK. The span at 81-90 shows a compositional bias: low complexity; sequence SGRCSGSEPS. The residue at position 102 (S102) is a Phosphoserine. T103 carries the phosphothreonine modification. Over residues 103–112 the composition is skewed to pro residues; the sequence is TPVPPSPAPT. Position 108 is a phosphoserine (S108). Positions 113-123 match the Nuclear localization signal motif; sequence PGLTKRVKKSK. An N6-acetyllysine mark is found at K123 and K130. Position 282 is a phosphoserine (S282). Residues 301–335 adopt a coiled-coil conformation; that stretch reads LEHELTVADRRQKREIRQLEQELHKWQVLVDSITG. Positions 363–419 constitute an FHA domain; it reads ITLGRATKDNQIDVDLSLEGPAWKISRKQGVIKLKNNGDFFIANEGRRPIYIDGRPV. Positions 389–396 match the UBR5-degron motif; that stretch reads RKQGVIKL.

As to quaternary structure, component of the chromatin remodeling INO80 complex; specifically part of a complex module associated with the N-terminus of INO80. Component of some MLL1/MLL complex, at least composed of the core components KMT2A/MLL1, ASH2L, HCFC1, WDR5 and RBBP5, as well as the facultative components BACC1, CHD8, E2F6, HSP70, INO80C, KANSL1, LAS1L, MAX, MCRS1, MGA, KAT8/MOF, PELP1, PHF20, PRP31, RING2, RUVB1/TIP49A, RUVB2/TIP49B, SENP3, TAF1, TAF4, TAF6, TAF7, TAF9 and TEX10. Component of the NSL complex at least composed of MOF/KAT8, KANSL1, KANSL2, KANSL3, MCRS1, PHF20, OGT1/OGT, WDR5 and HCFC1. Interacts with NOP2. Interacts with PINX1. Interacts with TERT. Interacts with CCDC85B. Interacts with DAXX. Interacts (via N-terminus) with FMR1 (via phosphorylated form). Interacts with FXR1 and FXR2. Interacts (via C-terminus) with NDE1 (via C-terminus); phosphorylation of NDE1 inhibits the interaction. Interacts (via C-terminus) with ZNF375. Interacts (via C-terminus) with active GTP-bound RHEB (via N-terminus) under conditions of high amino acid concentration; the interaction promotes mTORC1 complex activation by RHEB. Interacts (via N-terminus) with the mTORC1 complex; the interaction ensures mTORC1 activation by RHEB. Interacts with DYNC1I1; the interaction is required for the proper distribution of centriolar satellites. Interacts with TTBK2; the interaction is required for recruitment of TTBK2 to the mother centriole. Interacts with KIF2A; the interaction occurs during mitosis and facilitates chromosome alignment. Post-translationally, ubiquitinated by UBR5 when not assembled in the INO80 complex, leading to its degradation: UBR5 recognizes and binds a degron that is not accessible when MCRS1 is part of the INO80 complex. Phosphorylated by AURKA on Ser-35 and/or Ser-36 during mitosis which is required for kinetochore fiber assembly and mitotic progression but not for spindle localization or for chromosome-induced microtuble aster formation. Also phosphorylated by AURKA on Ser-85 and/or Ser-87. Phosphorylated by TTK/MPS1 which enhances recruitment of KIF2A to the minus end of spindle microtubules and facilitates precise chromosome segregation.

The protein localises to the nucleus. Its subcellular location is the nucleolus. It localises to the cytoplasm. The protein resides in the cytoskeleton. It is found in the microtubule organizing center. The protein localises to the centrosome. Its subcellular location is the spindle pole. It localises to the chromosome. The protein resides in the centromere. It is found in the kinetochore. The protein localises to the lysosome. Its subcellular location is the centriolar satellite. Functionally, modulates the transcription repressor activity of DAXX by recruiting it to the nucleolus. As part of the NSL complex it may be involved in acetylation of nucleosomal histone H4 on several lysine residues. Putative regulatory component of the chromatin remodeling INO80 complex which is involved in transcriptional regulation, DNA replication and probably DNA repair. May also be an inhibitor of TERT telomerase activity. Binds to G-quadruplex structures in mRNA. Binds to RNA homomer poly(G) and poly(U). Maintains RHEB at the lysosome in its active GTP-bound form and prevents its interaction with the mTORC1 complex inhibitor TSC2, ensuring activation of the mTORC1 complex by RHEB. Stabilizes the minus ends of kinetochore fibers by protecting them from depolymerization, ensuring functional spindle assembly during mitosis. Following phosphorylation by TTK/MPS1, enhances recruitment of KIF2A to the minus ends of mitotic spindle microtubules which promotes chromosome alignment. Regulates the morphology of microtubule minus ends in mitotic spindle by maintaining them in a closed conformation characterized by the presence of an electron-dense cap. Regulates G2/M transition and spindle assembly during oocyte meiosis. Mediates histone modifications and transcriptional regulation in germinal vesicle oocytes which are required for meiotic progression. Also regulates microtubule nucleation and spindle assembly by activating aurora kinases during oocyte meiosis. Contributes to the establishment of centriolar satellites and also plays a role in primary cilium formation by recruiting TTBK2 to the mother centriole which is necessary for removal of the CP110 cap from the mother centriole, an early step in ciliogenesis. Required for epiblast development during early embryogenesis. Essential for cell viability. This Mus musculus (Mouse) protein is Microspherule protein 1 (Mcrs1).